An 87-amino-acid chain; its full sequence is Acyl-CoA-binding protein (87 aa).

An N-acetylserine modification is found at S2. The ACB domain maps to 2-87; it reads SQAEFEKAAE…VEELKKKYGI (86 aa). K8 carries the post-translational modification N6-acetyllysine; alternate. Residue K8 is modified to N6-succinyllysine; alternate. K14 is a binding site for an acyl-CoA. Position 17 is an N6-succinyllysine (K17). The residue at position 19 (K19) is an N6-acetyllysine. At Y29 the chain carries Phosphotyrosine. An acyl-CoA-binding positions include 29–33, K51, K55, and Y74; that span reads YSHYK. K51 is subject to N6-acetyllysine. K55 is modified (N6-acetyllysine; alternate). K55 is modified (N6-succinyllysine; alternate). K55 is modified (N6-(2-hydroxyisobutyryl)lysine; alternate). An N6-malonyllysine; alternate modification is found at K55. K77 bears the N6-acetyllysine; alternate mark. K77 bears the N6-succinyllysine; alternate mark.

The protein belongs to the ACBP family. In terms of assembly, monomer.

It is found in the endoplasmic reticulum. The protein localises to the golgi apparatus. Binds medium- and long-chain acyl-CoA esters with very high affinity and may function as an intracellular carrier of acyl-CoA esters. It is also able to displace diazepam from the benzodiazepine (BZD) recognition site located on the GABA type A receptor. It is therefore possible that this protein also acts as a neuropeptide to modulate the action of the GABA receptor. Its function is as follows. DBI(32-86) has antibacterial properties. This is Acyl-CoA-binding protein (DBI) from Sus scrofa (Pig).